Consider the following 550-residue polypeptide: MLKNINPTQTQAWKALTAHFESAQDMDLKALFAQDSERFAKYSARFGQDILVDYSKNLVNAETMQHLFALAKETDLQSAITAMFKGEAINQTEDRAVLHTALRNRSNSPVLVNGEDVMPAVNAVLAKMKAFSERVIGGEWKGFTGKAITDVVNIGIGGSDLGPYMVTEALVPYKNHLTMHFVSNVDGTHMAETLKNVDPETTLFLVASKTFTTQETMTNAHTARDWFLKAAGDEAHVAKHFAALSTNGKAVAEFGIDTDNMFEFWDWVGGRYSLWSAIGLSIILSIGYDNFVELLAGAHEMDQHFVNTPFESNIPVILALIGIWYNNFHGAESEAILPYDQYLHRFAAYFQQGNMESNGKYVDRNGNPVTYQTGPIIWGEPGTNGQHAFYQLIHQGTKLIPCDFIAPAVSHNLVGDHHQKLMSNFFAQTEALAFGKSAQAVQAELEKAGKSAAEIAALVPFKVFEGNRPTNSILVKQITPRTLGNLIAMYEHKIFVQGVIWNIFSFDQWGVELGKQLANQILPELADSAAVTSHDSSTNGLINAFKAFRA.

The active-site Proton donor is the Glu356. Residues His387 and Lys515 contribute to the active site.

Belongs to the GPI family.

It localises to the cytoplasm. The catalysed reaction is alpha-D-glucose 6-phosphate = beta-D-fructose 6-phosphate. It participates in carbohydrate biosynthesis; gluconeogenesis. It functions in the pathway carbohydrate degradation; glycolysis; D-glyceraldehyde 3-phosphate and glycerone phosphate from D-glucose: step 2/4. Its function is as follows. Catalyzes the reversible isomerization of glucose-6-phosphate to fructose-6-phosphate. The polypeptide is Glucose-6-phosphate isomerase (Vibrio cholerae serotype O1 (strain ATCC 39315 / El Tor Inaba N16961)).